The sequence spans 88 residues: UPF0250 protein Shal_3239 (88 aa).

This sequence belongs to the UPF0250 family.

The polypeptide is UPF0250 protein Shal_3239 (Shewanella halifaxensis (strain HAW-EB4)).